Here is a 552-residue protein sequence, read N- to C-terminus: Chaperonin GroEL 3 (552 aa).

Residues 30 to 33 (TLGP), Lys-51, 87 to 91 (DGTTT), Gly-415, and Asp-495 contribute to the ATP site.

Belongs to the chaperonin (HSP60) family. Forms a cylinder of 14 subunits composed of two heptameric rings stacked back-to-back. Interacts with the co-chaperonin GroES.

The protein localises to the cytoplasm. The enzyme catalyses ATP + H2O + a folded polypeptide = ADP + phosphate + an unfolded polypeptide.. Together with its co-chaperonin GroES, plays an essential role in assisting protein folding. The GroEL-GroES system forms a nano-cage that allows encapsulation of the non-native substrate proteins and provides a physical environment optimized to promote and accelerate protein folding. The sequence is that of Chaperonin GroEL 3 from Mesorhizobium japonicum (strain LMG 29417 / CECT 9101 / MAFF 303099) (Mesorhizobium loti (strain MAFF 303099)).